The primary structure comprises 143 residues: ATP synthase subunit b' (143 aa).

Residues 6-26 (ATLPLMALQFVLLAIILNAIF) form a helical membrane-spanning segment.

The protein belongs to the ATPase B chain family. As to quaternary structure, F-type ATPases have 2 components, F(1) - the catalytic core - and F(0) - the membrane proton channel. F(1) has five subunits: alpha(3), beta(3), gamma(1), delta(1), epsilon(1). F(0) has four main subunits: a(1), b(1), b'(1) and c(10-14). The alpha and beta chains form an alternating ring which encloses part of the gamma chain. F(1) is attached to F(0) by a central stalk formed by the gamma and epsilon chains, while a peripheral stalk is formed by the delta, b and b' chains.

Its subcellular location is the cellular thylakoid membrane. Functionally, f(1)F(0) ATP synthase produces ATP from ADP in the presence of a proton or sodium gradient. F-type ATPases consist of two structural domains, F(1) containing the extramembraneous catalytic core and F(0) containing the membrane proton channel, linked together by a central stalk and a peripheral stalk. During catalysis, ATP synthesis in the catalytic domain of F(1) is coupled via a rotary mechanism of the central stalk subunits to proton translocation. Its function is as follows. Component of the F(0) channel, it forms part of the peripheral stalk, linking F(1) to F(0). The b'-subunit is a diverged and duplicated form of b found in plants and photosynthetic bacteria. This is ATP synthase subunit b' from Crocosphaera subtropica (strain ATCC 51142 / BH68) (Cyanothece sp. (strain ATCC 51142)).